Reading from the N-terminus, the 211-residue chain is Pyridoxine/pyridoxamine 5'-phosphate oxidase (211 aa).

Residues 7 to 10 (RREY) and K65 contribute to the substrate site. FMN is bound by residues 60 to 65 (RIVLLK), 75 to 76 (FT), K82, and Q104. Positions 122, 126, and 130 each coordinate substrate. FMN is bound by residues 139 to 140 (QS) and W184. A substrate-binding site is contributed by 190-192 (RLH). An FMN-binding site is contributed by R194.

This sequence belongs to the pyridoxamine 5'-phosphate oxidase family. Homodimer. FMN serves as cofactor.

It carries out the reaction pyridoxamine 5'-phosphate + O2 + H2O = pyridoxal 5'-phosphate + H2O2 + NH4(+). The enzyme catalyses pyridoxine 5'-phosphate + O2 = pyridoxal 5'-phosphate + H2O2. It functions in the pathway cofactor metabolism; pyridoxal 5'-phosphate salvage; pyridoxal 5'-phosphate from pyridoxamine 5'-phosphate: step 1/1. The protein operates within cofactor metabolism; pyridoxal 5'-phosphate salvage; pyridoxal 5'-phosphate from pyridoxine 5'-phosphate: step 1/1. Catalyzes the oxidation of either pyridoxine 5'-phosphate (PNP) or pyridoxamine 5'-phosphate (PMP) into pyridoxal 5'-phosphate (PLP). This Teredinibacter turnerae (strain ATCC 39867 / T7901) protein is Pyridoxine/pyridoxamine 5'-phosphate oxidase.